Here is a 215-residue protein sequence, read N- to C-terminus: Adenylate kinase (215 aa).

Residue 10–15 (GAGKGT) participates in ATP binding. The segment at 30-59 (STGDMLREAVAAGTELGKKVKEIIEKGLLV) is NMP. AMP contacts are provided by residues Thr-31, Arg-36, 57 to 59 (LLV), 85 to 88 (GFPR), and Gln-92. Residues 126 to 163 (SRRVCPSCGKVYNLLTIKPKNDMLCDDCNIGLIQREDD) are LID. ATP is bound at residue Arg-127. Zn(2+) contacts are provided by Cys-130 and Cys-133. An ATP-binding site is contributed by 136-137 (VY). Positions 150 and 153 each coordinate Zn(2+). Residues Arg-160 and Arg-171 each coordinate AMP. Leu-199 provides a ligand contact to ATP.

Belongs to the adenylate kinase family. In terms of assembly, monomer.

The protein localises to the cytoplasm. It carries out the reaction AMP + ATP = 2 ADP. The protein operates within purine metabolism; AMP biosynthesis via salvage pathway; AMP from ADP: step 1/1. Catalyzes the reversible transfer of the terminal phosphate group between ATP and AMP. Plays an important role in cellular energy homeostasis and in adenine nucleotide metabolism. The protein is Adenylate kinase of Kosmotoga olearia (strain ATCC BAA-1733 / DSM 21960 / TBF 19.5.1).